A 72-amino-acid chain; its full sequence is 3-deoxy-manno-octulosonate cytidylyltransferase (72 aa).

The protein belongs to the KdsB family. As to quaternary structure, homodimer.

It is found in the cytoplasm. The enzyme catalyses 3-deoxy-alpha-D-manno-oct-2-ulosonate + CTP = CMP-3-deoxy-beta-D-manno-octulosonate + diphosphate. Its pathway is nucleotide-sugar biosynthesis; CMP-3-deoxy-D-manno-octulosonate biosynthesis; CMP-3-deoxy-D-manno-octulosonate from 3-deoxy-D-manno-octulosonate and CTP: step 1/1. It functions in the pathway bacterial outer membrane biogenesis; lipopolysaccharide biosynthesis. Functionally, activates KDO (a required 8-carbon sugar) for incorporation into bacterial lipopolysaccharide in Gram-negative bacteria. The protein is 3-deoxy-manno-octulosonate cytidylyltransferase (kpsU) of Escherichia coli.